Reading from the N-terminus, the 245-residue chain is Flavin-dependent thymidylate synthase (245 aa).

Residues 6 to 220 form the ThyX domain; the sequence is PRVELLAHTP…PELFAHAGAK (215 aa). Residues serine 65, 89-91, and glutamine 97 contribute to the FAD site; that span reads RHR. DUMP contacts are provided by residues 86-89, 97-101, and arginine 159; these read QLVR and QQSQR. A ThyX motif motif is present at residues 89-99; the sequence is RHRIASFSQQS. FAD contacts are provided by residues 175 to 177 and histidine 181; that span reads NCR. Arginine 186 is a dUMP binding site. Arginine 186 (involved in ionization of N3 of dUMP, leading to its activation) is an active-site residue.

It belongs to the thymidylate synthase ThyX family. As to quaternary structure, homotetramer. It depends on FAD as a cofactor.

The enzyme catalyses dUMP + (6R)-5,10-methylene-5,6,7,8-tetrahydrofolate + NADPH + H(+) = dTMP + (6S)-5,6,7,8-tetrahydrofolate + NADP(+). The protein operates within pyrimidine metabolism; dTTP biosynthesis. In terms of biological role, catalyzes the reductive methylation of 2'-deoxyuridine-5'-monophosphate (dUMP) to 2'-deoxythymidine-5'-monophosphate (dTMP) while utilizing 5,10-methylenetetrahydrofolate (mTHF) as the methyl donor, and NADPH and FADH(2) as the reductant. The protein is Flavin-dependent thymidylate synthase of Nitratidesulfovibrio vulgaris (strain ATCC 29579 / DSM 644 / CCUG 34227 / NCIMB 8303 / VKM B-1760 / Hildenborough) (Desulfovibrio vulgaris).